The following is a 549-amino-acid chain: Coiled-coil domain-containing protein 102A (549 aa).

Disordered stretches follow at residues 1 to 61 (MSHG…TAPA), 135 to 195 (LAGA…GSQE), and 207 to 248 (PEEP…EEDA). Serine 12, serine 26, and serine 28 each carry phosphoserine. A compositionally biased stretch (pro residues) spans 37 to 55 (SLPPTPPSGTPSPGPPPSL). The stretch at 69 to 160 (ESREELRLRE…ARGRELARLR (92 aa)) forms a coiled coil. Basic and acidic residues-rich tracts occupy residues 135–158 (LAGA…ELAR) and 165–187 (AADK…DIGA). 2 coiled-coil regions span residues 263 to 398 (KVLL…NASA) and 426 to 517 (KLKK…NAPL). Disordered stretches follow at residues 472–496 (ELDE…QSEN) and 509–549 (RRQQ…IQVA). The segment covering 530-549 (EAGDGASDLDEDEDLQIQVA) has biased composition (acidic residues). Serine 536 carries the phosphoserine modification.

This chain is Coiled-coil domain-containing protein 102A (Ccdc102a), found in Mus musculus (Mouse).